Reading from the N-terminus, the 699-residue chain is SHC SH2 domain-binding protein 1 homolog A (699 aa).

PbH1 repeat units lie at residues 480–502, 503–524, and 532–554; these read SAEL…EIYP, GSKC…LIKD, and IPKI…VLVK. Positions 603–627 form a coiled coil; sequence AVEHTNNLEKDQGNLAIAKEEVECE.

It is found in the midbody. It localises to the cytoplasm. Its subcellular location is the cytoskeleton. The protein localises to the spindle. Its function is as follows. May play a role in signaling pathways governing cellular proliferation. In Xenopus laevis (African clawed frog), this protein is SHC SH2 domain-binding protein 1 homolog A (shcbp1-a).